We begin with the raw amino-acid sequence, 343 residues long: L-threonine 3-dehydrogenase (343 aa).

Residue C40 coordinates Zn(2+). Catalysis depends on charge relay system residues T42 and H45. Residues H65, E66, C95, C98, C101, and C109 each coordinate Zn(2+). Residues I177, D197, R202, 264–266, and 288–289 each bind NAD(+); these read LGI and IY.

The protein belongs to the zinc-containing alcohol dehydrogenase family. In terms of assembly, homotetramer. Zn(2+) is required as a cofactor.

It localises to the cytoplasm. It carries out the reaction L-threonine + NAD(+) = (2S)-2-amino-3-oxobutanoate + NADH + H(+). The protein operates within amino-acid degradation; L-threonine degradation via oxydo-reductase pathway; glycine from L-threonine: step 1/2. Functionally, catalyzes the NAD(+)-dependent oxidation of L-threonine to 2-amino-3-ketobutyrate. The chain is L-threonine 3-dehydrogenase from Vibrio vulnificus (strain CMCP6).